The following is a 463-amino-acid chain: Phosphomethylpyrimidine synthase (463 aa).

Substrate-binding positions include N80, M109, Y138, H173, S193–G195, D234–R237, and E273. A Zn(2+)-binding site is contributed by H277. Residue Y300 participates in substrate binding. Residue H341 coordinates Zn(2+). [4Fe-4S] cluster is bound by residues C421, C424, and C429.

This sequence belongs to the ThiC family. In terms of assembly, homodimer. It depends on [4Fe-4S] cluster as a cofactor.

The catalysed reaction is 5-amino-1-(5-phospho-beta-D-ribosyl)imidazole + S-adenosyl-L-methionine = 4-amino-2-methyl-5-(phosphooxymethyl)pyrimidine + CO + 5'-deoxyadenosine + formate + L-methionine + 3 H(+). It participates in cofactor biosynthesis; thiamine diphosphate biosynthesis. In terms of biological role, catalyzes the synthesis of the hydroxymethylpyrimidine phosphate (HMP-P) moiety of thiamine from aminoimidazole ribotide (AIR) in a radical S-adenosyl-L-methionine (SAM)-dependent reaction. In Anaeromyxobacter sp. (strain K), this protein is Phosphomethylpyrimidine synthase.